The following is a 242-amino-acid chain: tRNA1(Val) (adenine(37)-N6)-methyltransferase (242 aa).

Belongs to the methyltransferase superfamily. tRNA (adenine-N(6)-)-methyltransferase family.

Its subcellular location is the cytoplasm. The enzyme catalyses adenosine(37) in tRNA1(Val) + S-adenosyl-L-methionine = N(6)-methyladenosine(37) in tRNA1(Val) + S-adenosyl-L-homocysteine + H(+). In terms of biological role, specifically methylates the adenine in position 37 of tRNA(1)(Val) (anticodon cmo5UAC). The sequence is that of tRNA1(Val) (adenine(37)-N6)-methyltransferase from Mannheimia succiniciproducens (strain KCTC 0769BP / MBEL55E).